Reading from the N-terminus, the 441-residue chain is Lysine histidine transporter 2 (441 aa).

The Cytoplasmic segment spans residues 1-32; it reads MGNSEMSASEVAAAKQKNVDDWLPITSSRNAK. Residues 33 to 53 traverse the membrane as a helical segment; it reads WWYSAFHNVTAMVGAGVLSLP. Residues 54–58 are Extracellular-facing; that stretch reads YAMSN. Residues 59–79 traverse the membrane as a helical segment; it reads LGWGPGVTIMVMSWIITLYTL. Over 80–110 the chain is Cytoplasmic; the sequence is WQMVEMHEIVPGKRLDRYHELGQHAFGEKLG. The chain crosses the membrane as a helical span at residues 111-131; sequence LWIVVPQQLIVEVGVDIVYMV. The Extracellular segment spans residues 132–152; the sequence is TGGASLKKVHQLVCPDCKEIR. Residues 153 to 173 traverse the membrane as a helical segment; the sequence is TTFWIMIFASVHFVISHLPNF. The Cytoplasmic portion of the chain corresponds to 174–175; sequence NS. The chain crosses the membrane as a helical span at residues 176-196; the sequence is ISIISLAAAVMSLTYSTIAWA. Residues 197-222 are Extracellular-facing; sequence ASVHKGVHPDVDYSPRASTDVGKVFN. Residues 223 to 243 form a helical membrane-spanning segment; sequence FLNALGDVAFAYAGHNVVLEI. Residues 244–263 are Cytoplasmic-facing; it reads QATIPSTPEMPSKVPMWRGV. A helical membrane pass occupies residues 264–284; that stretch reads IVAYIVVAICYFPVAFLGYYI. Topologically, residues 285 to 300 are extracellular; sequence FGNSVDDNILITLEKP. A helical membrane pass occupies residues 301-321; it reads IWLIAMANMFVVIHVIGSYQI. Over 322-347 the chain is Cytoplasmic; it reads FAMPVFDMLETVLVKKMNFNPSFKLR. The helical transmembrane segment at 348–370 threads the bilayer; it reads FITRSLYVAFTMIVAICVPFFGG. At 371–373 the chain is on the extracellular side; it reads LLG. Residues 374 to 396 form a helical membrane-spanning segment; that stretch reads FFGGFAFAPTTYYLPCIMWLVLK. Over 397 to 406 the chain is Cytoplasmic; sequence KPKRFGLSWT. Residues 407–427 traverse the membrane as a helical segment; it reads ANWFCIIVGVLLTILAPIGGL. Topologically, residues 428–441 are extracellular; sequence RTIIINAKTYKFFS.

It belongs to the amino acid/polyamine transporter 2 family. Amino acid/auxin permease (AAAP) (TC 2.A.18.2) subfamily. Expressed in flower buds and to lower levels in leaves and stems. Not detected in roots and siliques. Restricted to the tapetum cell layer.

The protein localises to the cell membrane. Its activity is regulated as follows. Inhibited by diethylstibestrol (DES), 2,4-dinitrophenol (DNP) and carbonlycyanide m-chlorophenylhydrazone (CCCP). Functionally, amino acid-proton symporter. Transporter with a broad specificity for neutral and acidic amino acids. Basic amino acids are only marginally transported. Involved in import of amino acids into the tapetum cells for synthesis of compounds important for microspore structure. This is Lysine histidine transporter 2 (LHT2) from Arabidopsis thaliana (Mouse-ear cress).